We begin with the raw amino-acid sequence, 247 residues long: Ubiquinone biosynthesis O-methyltransferase (247 aa).

S-adenosyl-L-methionine is bound by residues Arg-39, Gly-70, Asp-91, and Met-134.

This sequence belongs to the methyltransferase superfamily. UbiG/COQ3 family.

The catalysed reaction is a 3-demethylubiquinol + S-adenosyl-L-methionine = a ubiquinol + S-adenosyl-L-homocysteine + H(+). It carries out the reaction a 3-(all-trans-polyprenyl)benzene-1,2-diol + S-adenosyl-L-methionine = a 2-methoxy-6-(all-trans-polyprenyl)phenol + S-adenosyl-L-homocysteine + H(+). The protein operates within cofactor biosynthesis; ubiquinone biosynthesis. O-methyltransferase that catalyzes the 2 O-methylation steps in the ubiquinone biosynthetic pathway. The polypeptide is Ubiquinone biosynthesis O-methyltransferase (Cereibacter sphaeroides (strain ATCC 17029 / ATH 2.4.9) (Rhodobacter sphaeroides)).